We begin with the raw amino-acid sequence, 963 residues long: Unconventional myosin-XIX (963 aa).

A Myosin motor domain is found at 35–758; that stretch reads HQLDDLTKVN…MLELLECGRA (724 aa). 132–139 lines the ATP pocket; the sequence is GESGAGKT. Residues 602 to 624 are actin-binding; that stretch reads LEQLLQVLHNTTPHYIRCIKPNS. IQ domains lie at 762 to 782 and 783 to 812; these read EQCA…KQEK and QRRA…AATV. Residues 829–963 form a myMOMA region region; that stretch reads SKELDGMEEK…LLESHRPVQV (135 aa).

It belongs to the TRAFAC class myosin-kinesin ATPase superfamily. Myosin family. Myosin is a hexamer of 2 heavy chains and 4 light chains: interacts with myosin light chains MYL9 and MYL12B.

It localises to the mitochondrion outer membrane. Its subcellular location is the cytoplasm. The protein resides in the cytoskeleton. Functionally, actin-based motor molecule with ATPase activity that localizes to the mitochondrion outer membrane. Motor protein that moves towards the plus-end of actin filaments. Required for mitochondrial inheritance during mitosis. May be involved in mitochondrial transport or positioning. The protein is Unconventional myosin-XIX of Mus musculus (Mouse).